A 520-amino-acid chain; its full sequence is BTB/POZ domain-containing protein At3g50780 (520 aa).

The disordered stretch occupies residues 43–68; that stretch reads SHNSLTKHKQSSPALQPPKPEKKPSS. One can recognise a BTB domain in the interval 127–196; the sequence is AKVILVGKQG…MYCKDMKQRL (70 aa).

It participates in protein modification; protein ubiquitination. May act as a substrate-specific adapter of an E3 ubiquitin-protein ligase complex (CUL3-RBX1-BTB) which mediates the ubiquitination and subsequent proteasomal degradation of target proteins. The protein is BTB/POZ domain-containing protein At3g50780 of Arabidopsis thaliana (Mouse-ear cress).